The sequence spans 43 residues: Jararafibrase-3 (43 aa).

The 34-residue stretch at Met-10 to Phe-43 folds into the C-type lectin domain.

It belongs to the true venom lectin family. As to quaternary structure, monomer. In terms of tissue distribution, expressed by the venom gland.

It is found in the secreted. Inhibited by 1,10-phenanthroline and EDTA. May have both metalloproteinase and lectin activities. Induces local hemorrhage in the skin of rats. Degrades type-IV collagen, gelatin, laminin and fibronectin. Has hemagglutinating activity on red blood cells. In Bothrops jararaca (Jararaca), this protein is Jararafibrase-3.